Consider the following 1805-residue polypeptide: Cytadherence high molecular weight protein 2 (1805 aa).

Coiled-coil stretches lie at residues 28–838, 914–1591, 1632–1723, and 1777–1804; these read EKNR…NNAF, ELKI…LRTQ, DNTL…QHNT, and NITK…KAAS.

Its function is as follows. Component of the cytoskeleton-like structure which stabilizes the shape of the wall-less Mycoplasma. This cytoskeleton-like network of accessory proteins containing HMW proteins 1 to 5 allows the proper anchoring of cytadhesin proteins in the mycoplasmal membrane at the attachment organelle. This chain is Cytadherence high molecular weight protein 2 (hmw2), found in Mycoplasma genitalium (strain ATCC 33530 / DSM 19775 / NCTC 10195 / G37) (Mycoplasmoides genitalium).